Consider the following 150-residue polypeptide: Large ribosomal subunit protein bL9 (150 aa).

The protein belongs to the bacterial ribosomal protein bL9 family.

In terms of biological role, binds to the 23S rRNA. This Streptococcus equi subsp. equi (strain 4047) protein is Large ribosomal subunit protein bL9.